The primary structure comprises 196 residues: ATP-dependent Clp protease proteolytic subunit 1 (196 aa).

Ser96 acts as the Nucleophile in catalysis. His121 is a catalytic residue.

It belongs to the peptidase S14 family. As to quaternary structure, fourteen ClpP subunits assemble into 2 heptameric rings which stack back to back to give a disk-like structure with a central cavity, resembling the structure of eukaryotic proteasomes.

The protein resides in the cytoplasm. It catalyses the reaction Hydrolysis of proteins to small peptides in the presence of ATP and magnesium. alpha-casein is the usual test substrate. In the absence of ATP, only oligopeptides shorter than five residues are hydrolyzed (such as succinyl-Leu-Tyr-|-NHMec, and Leu-Tyr-Leu-|-Tyr-Trp, in which cleavage of the -Tyr-|-Leu- and -Tyr-|-Trp bonds also occurs).. Its function is as follows. Cleaves peptides in various proteins in a process that requires ATP hydrolysis. Has a chymotrypsin-like activity. Plays a major role in the degradation of misfolded proteins. The sequence is that of ATP-dependent Clp protease proteolytic subunit 1 from Prochlorococcus marinus subsp. pastoris (strain CCMP1986 / NIES-2087 / MED4).